The following is a 385-amino-acid chain: Glucose-fructose oxidoreductase domain-containing protein 2 (385 aa).

Residues 1–25 (MKLLPGVGVFGTGSSARVLVPLLRA) form the signal peptide.

The protein belongs to the Gfo/Idh/MocA family.

It localises to the secreted. It is found in the extracellular space. The protein localises to the extracellular matrix. Its function is as follows. Promotes matrix assembly. The polypeptide is Glucose-fructose oxidoreductase domain-containing protein 2 (Gfod2) (Mus musculus (Mouse)).